The following is a 146-amino-acid chain: Hemoglobin subunit beta (146 aa).

N-acetylvaline is present on Val-1. Residues 2–146 (HLTGEEKSAV…VATALAHKYH (145 aa)) form the Globin domain. At Thr-12 the chain carries Phosphothreonine. At Ser-44 the chain carries Phosphoserine. A heme b-binding site is contributed by His-63. Position 82 is an N6-acetyllysine (Lys-82). His-92 contributes to the heme b binding site. Position 93 is an S-nitrosocysteine (Cys-93). Lys-144 carries the N6-acetyllysine modification.

This sequence belongs to the globin family. In terms of assembly, heterotetramer of two alpha chains and two beta chains. Red blood cells.

Involved in oxygen transport from the lung to the various peripheral tissues. This chain is Hemoglobin subunit beta (HBB), found in Tursiops truncatus (Atlantic bottle-nosed dolphin).